We begin with the raw amino-acid sequence, 131 residues long: Phosphoribosyl-ATP pyrophosphatase 2 (131 aa).

Residues 105-131 are disordered; sequence RIGKPAAPHATRRPVIPQEARAVRKHR.

It belongs to the PRA-PH family.

Its subcellular location is the cytoplasm. The enzyme catalyses 1-(5-phospho-beta-D-ribosyl)-ATP + H2O = 1-(5-phospho-beta-D-ribosyl)-5'-AMP + diphosphate + H(+). It functions in the pathway amino-acid biosynthesis; L-histidine biosynthesis; L-histidine from 5-phospho-alpha-D-ribose 1-diphosphate: step 2/9. The polypeptide is Phosphoribosyl-ATP pyrophosphatase 2 (hisE2) (Rhodopseudomonas palustris (strain ATCC BAA-98 / CGA009)).